Here is a 149-residue protein sequence, read N- to C-terminus: Transcriptional repressor NrdR (149 aa).

A zinc finger spans residues 3–34 (CPFCSAVDTKVIDSRLVAEGHQVRRRRECLLC). One can recognise an ATP-cone domain in the interval 49-139 (PRVIKSNGSR…VYRSFEDIRE (91 aa)).

Belongs to the NrdR family. It depends on Zn(2+) as a cofactor.

In terms of biological role, negatively regulates transcription of bacterial ribonucleotide reductase nrd genes and operons by binding to NrdR-boxes. This is Transcriptional repressor NrdR from Aeromonas salmonicida (strain A449).